A 244-amino-acid chain; its full sequence is Signal recognition particle receptor subunit beta (244 aa).

The chain crosses the membrane as a helical span at residues 7-23 (IIACLLVIGTTIALIAV). GTP is bound by residues 45–53 (GPQNSGKTS), 66–69 (TVVS), Gly90, and 154–157 (NKSE).

The protein belongs to the SRP receptor beta subunit family. In terms of assembly, heterodimer of an alpha and a beta chain.

Its subcellular location is the endoplasmic reticulum membrane. Functionally, component of the signal recognition particle (SRP) complex receptor (SR). Ensures, in conjunction with the SRP complex, the correct targeting of the nascent secretory proteins to the endoplasmic reticulum membrane system. May mediate the membrane association of SR. The polypeptide is Signal recognition particle receptor subunit beta (SRP102) (Saccharomyces cerevisiae (strain ATCC 204508 / S288c) (Baker's yeast)).